The primary structure comprises 450 residues: Chromosomal replication initiator protein DnaA (450 aa).

The tract at residues 1–71 (MEDVWLQAQS…SVRSLTDSHF (71 aa)) is domain I, interacts with DnaA modulators. The domain II stretch occupies residues 71 to 113 (FQVELQVAARQQEKTAKSPRKSHTEDELGPVESEKCAPAEFST). The interval 82–103 (QEKTAKSPRKSHTEDELGPVES) is disordered. Residues 114 to 330 (NLNAKYTFDT…GMLIRLGAVA (217 aa)) are domain III, AAA+ region. Residues Gly158, Gly160, Lys161, and Thr162 each coordinate ATP. Residues 331 to 450 (SLTGKNITLD…IETLRKGLLN (120 aa)) form a domain IV, binds dsDNA region.

Belongs to the DnaA family. As to quaternary structure, oligomerizes as a right-handed, spiral filament on DNA at oriC.

It is found in the cytoplasm. Its function is as follows. Plays an essential role in the initiation and regulation of chromosomal replication. ATP-DnaA binds to the origin of replication (oriC) to initiate formation of the DNA replication initiation complex once per cell cycle. Binds the DnaA box (a 9 base pair repeat at the origin) and separates the double-stranded (ds)DNA. Forms a right-handed helical filament on oriC DNA; dsDNA binds to the exterior of the filament while single-stranded (ss)DNA is stabiized in the filament's interior. The ATP-DnaA-oriC complex binds and stabilizes one strand of the AT-rich DNA unwinding element (DUE), permitting loading of DNA polymerase. After initiation quickly degrades to an ADP-DnaA complex that is not apt for DNA replication. Binds acidic phospholipids. This is Chromosomal replication initiator protein DnaA from Geobacter metallireducens (strain ATCC 53774 / DSM 7210 / GS-15).